Reading from the N-terminus, the 330-residue chain is Acrylyl-CoA reductase AcuI (330 aa).

Residues tyrosine 44, 159–162 (AGGV), 181–183 (TGR), arginine 201, leucine 247, and serine 272 each bind NADP(+).

This sequence belongs to the zinc-containing alcohol dehydrogenase family. Acrylyl-CoA reductase subfamily. In terms of assembly, homodimer.

The protein resides in the cytoplasm. It carries out the reaction propanoyl-CoA + NADP(+) = acryloyl-CoA + NADPH + H(+). Functionally, probably catalyzes the NADPH-dependent reduction of acrylyl-CoA to propanoyl-CoA. Restores acrylate resistance when expressed in an E.coli strain K12 acuI deletion. This Ruegeria pomeroyi (strain ATCC 700808 / DSM 15171 / DSS-3) (Silicibacter pomeroyi) protein is Acrylyl-CoA reductase AcuI (acuI).